We begin with the raw amino-acid sequence, 287 residues long: Glycine--tRNA ligase alpha subunit (287 aa).

Belongs to the class-II aminoacyl-tRNA synthetase family. As to quaternary structure, tetramer of two alpha and two beta subunits.

It localises to the cytoplasm. The enzyme catalyses tRNA(Gly) + glycine + ATP = glycyl-tRNA(Gly) + AMP + diphosphate. The sequence is that of Glycine--tRNA ligase alpha subunit from Campylobacter jejuni (strain RM1221).